The chain runs to 114 residues: DNA polymerase epsilon subunit C (114 aa).

The segment at 91–114 is disordered; the sequence is PDAVAPATGEEEQPKRRGRKPAQE.

Heterotetramer. Consists of four subunits: POL2, DPB2, DPB3 and DPB4.

The protein localises to the nucleus. As accessory component of the DNA polymerase epsilon (DNA polymerase II) participates in chromosomal DNA replication. The sequence is that of DNA polymerase epsilon subunit C (DPB3) from Yarrowia lipolytica (strain CLIB 122 / E 150) (Yeast).